We begin with the raw amino-acid sequence, 136 residues long: Urease subunit beta (136 aa).

Residues 113–136 form a disordered region; it reads NDEYAGVFGDNGAENVNKKGGKRS.

The protein belongs to the urease beta subunit family. Heterotrimer of UreA (gamma), UreB (beta) and UreC (alpha) subunits. Three heterotrimers associate to form the active enzyme.

The protein localises to the cytoplasm. The catalysed reaction is urea + 2 H2O + H(+) = hydrogencarbonate + 2 NH4(+). It functions in the pathway nitrogen metabolism; urea degradation; CO(2) and NH(3) from urea (urease route): step 1/1. This is Urease subunit beta from Staphylococcus aureus (strain USA300).